The following is a 320-amino-acid chain: Olfactory receptor 51E2 (320 aa).

Residues 1-24 lie on the Extracellular side of the membrane; it reads MSSCNFTHATFVLIGIPGLEKAHF. N-linked (GlcNAc...) asparagine glycosylation occurs at asparagine 5. The helical transmembrane segment at 25-45 threads the bilayer; it reads WVGFPLLSMYVVAMFGNCIVV. Topologically, residues 46–53 are cytoplasmic; that stretch reads FIVRTERS. A helical membrane pass occupies residues 54–74; sequence LHAPMYLFLCMLAAIDLALST. Over 75-98 the chain is Extracellular; the sequence is STMPKILALFWFDSREISFEACLT. Cysteine 96 and cysteine 178 are oxidised to a cystine. The chain crosses the membrane as a helical span at residues 99-119; the sequence is QMFFIHALSAIESTILLAMAF. At 120–138 the chain is on the cytoplasmic side; the sequence is DRYVAICHPLRHAAVLNNT. Residues 139–159 form a helical membrane-spanning segment; that stretch reads VTAQIGIVAVVRGSLFFFPLP. At 160 to 195 the chain is on the extracellular side; the sequence is LLIKRLAFCHSNVLSHSYCVHQDVMKLAYADTLPNV. A helical transmembrane segment spans residues 196–216; sequence VYGLTAILLVMGVDVMFISLS. The Cytoplasmic segment spans residues 217–236; it reads YFLIIRTVLQLPSKSERAKA. Residues 237–257 form a helical membrane-spanning segment; sequence FGTCVSHIGVVLAFYVPLIGL. At 258 to 272 the chain is on the extracellular side; the sequence is SVVHRFGNSLHPIVR. Residues 273–293 form a helical membrane-spanning segment; it reads VVMGDIYLLLPPVINPIIYGA. Over 294–320 the chain is Cytoplasmic; it reads KTKQIRTRVLAMFKISCDKDLQAVGGK.

It belongs to the G-protein coupled receptor 1 family. In terms of tissue distribution, highly expressed in the prostate. Also expressed in spleen, liver, olfactory epithelium, retinal pigment epithelium and medulla oblongata. In the retinal pigment epithelium expression is restricted to the pigment cells and choroid (at protein level). Expressed in epidermal melanocytes (at protein level).

It is found in the cell membrane. It localises to the early endosome membrane. In terms of biological role, olfactory receptor. Activated by the odorant, beta-ionone, a synthetic terpenoid. The activity of this receptor is probably mediated by G-proteins leading to the elevation of intracellular Ca(2+), cAMP and activation of the protein kinases PKA and MAPK3/MAPK1. Stimulation of OR51E2 by beta-ionone affects melanocyte proliferation, differentiation, and melanogenesis. Activation of OR51E2 by beta-ionone increases proliferation and migration of primary retinal pigment epithelial (RPE) cells. Activated also by the short-chain fatty acids (SCFA) acetate and propionate. In response to SCFA, may positively regulate renin secretion and increase blood pressure. May also be activated by steroid hormones and regulate cell proliferation. Activated by L-lactate in glomus cells. This chain is Olfactory receptor 51E2, found in Homo sapiens (Human).